A 474-amino-acid chain; its full sequence is NAD(P) transhydrogenase subunit beta (474 aa).

Helical transmembrane passes span 4–24 (GLVQ…LAGL), 46–66 (IATI…AMII), 83–103 (MPEL…LVGF), 132–152 (VLTN…AVTF), 181–200 (LAAL…NPES), 202–222 (FPVL…VASI), 229–249 (VVVS…GFIL), 253–273 (LLIV…YIMC), and 321–341 (VIIT…VADI).

This sequence belongs to the PNT beta subunit family. In terms of assembly, heterodimer of an alpha and a beta chain.

It localises to the cell inner membrane. The catalysed reaction is NAD(+) + NADPH + H(+)(in) = NADH + NADP(+) + H(+)(out). The transhydrogenation between NADH and NADP is coupled to respiration and ATP hydrolysis and functions as a proton pump across the membrane. The chain is NAD(P) transhydrogenase subunit beta (pntB) from Haemophilus influenzae (strain ATCC 51907 / DSM 11121 / KW20 / Rd).